The sequence spans 811 residues: Transmembrane protease serine 6 (811 aa).

Residues 1 to 48 (MPRCFQLPCSTRMPTTEVPQAADGQGDAGDGEEAAEPEGKFKPPKNTK) form a disordered region. At 1–59 (MPRCFQLPCSTRMPTTEVPQAADGQGDAGDGEEAAEPEGKFKPPKNTKRKNRDYVRFTP) the chain is on the cytoplasmic side. The span at 8–18 (PCSTRMPTTEV) shows a compositional bias: polar residues. The helical; Signal-anchor for type II membrane protein transmembrane segment at 60–80 (LLLVLAALVSAGVMLWYFLGY) threads the bilayer. At 81 to 811 (KAEVTVSQVY…VINWIQQVLT (731 aa)) the chain is on the extracellular side. The SEA domain maps to 86-209 (VSQVYSGSLR…EGLVILEASV (124 aa)). N-linked (GlcNAc...) asparagine glycans are attached at residues asparagine 138, asparagine 184, asparagine 216, asparagine 338, asparagine 433, and asparagine 453. CUB domains follow at residues 213–336 (VVLN…QDCQ) and 323–440 (FLLS…QISL). A disulfide bridge connects residues cysteine 335 and cysteine 366. 3 consecutive LDL-receptor class A domains span residues 445-477 (VQVY…CDGI), 478-514 (KDCP…DRQP), and 518-555 (NGSD…DGQS). 10 cysteine pairs are disulfide-bonded: cysteine 458/cysteine 470, cysteine 464/cysteine 480, cysteine 474/cysteine 489, cysteine 491/cysteine 503, cysteine 497/cysteine 516, cysteine 510/cysteine 525, cysteine 531/cysteine 543, cysteine 538/cysteine 557, cysteine 551/cysteine 566, and cysteine 602/cysteine 618. Residue asparagine 518 is glycosylated (N-linked (GlcNAc...) asparagine). The Peptidase S1 domain maps to 577–811 (IVGGTVSSEG…VINWIQQVLT (235 aa)). Residues histidine 617 and aspartate 668 each act as charge relay system in the active site. Disulfide bonds link cysteine 702/cysteine 768, cysteine 733/cysteine 747, and cysteine 758/cysteine 787. Serine 762 acts as the Charge relay system in catalysis.

It belongs to the peptidase S1 family. In terms of assembly, interacts with HJV. The single-chain zymogen undergoes autoproteolytic processing. This results in TMPRSS6 shedding from the cell surface and conversion into an activated two-chains form which is released extracellularly. The process involves a trans-activation mechanism that requires TMPRSS6 oligomerization. Expressed at highest levels in adult mice liver, kidney and uterus. Also strongly expressed within the nasal cavity by olfactory epithelial cells. A weak, but detectable, signal in adult mice tissues analyzed including brain, lung, heart, kidney, spleen, muscle, intestine, thymus and pancreas. No signal in residual embryonic yolk sac, developing kidney tubules or in embryonic tissues analyzed including lung, heart, gastrointestinal tract and epithelium of the oral cavity.

Its subcellular location is the cell membrane. In terms of biological role, membrane-bound serine protease. Through the cleavage of cell surface HJV, a regulator of the expression of the iron absorption-regulating hormone hepicidin/HAMP, plays a role in iron homeostasis. The sequence is that of Transmembrane protease serine 6 (Tmprss6) from Mus musculus (Mouse).